The sequence spans 145 residues: Hemoglobin fetal subunit beta (145 aa).

Residues 1-145 (MLSAEEKAAV…VANALAHRYH (145 aa)) enclose the Globin domain. Residues His62 and His91 each coordinate heme b.

This sequence belongs to the globin family. In terms of assembly, heterotetramer of two alpha chains and two beta chains. In terms of tissue distribution, red blood cells.

In terms of biological role, involved in oxygen transport from the lung to the various peripheral tissues. In Bos taurus (Bovine), this protein is Hemoglobin fetal subunit beta.